The following is a 65-amino-acid chain: Large ribosomal subunit protein bL35 (65 aa).

The disordered stretch occupies residues 1-65 (MPKMKTNRAA…GRLDRMLPYL (65 aa)). Residues 10 to 44 (AAKRFRKTASGKYKAGHANRSHILTKKATKRKRNL) are compositionally biased toward basic residues. Positions 50-65 (VRAEDAGRLDRMLPYL) are enriched in basic and acidic residues.

It belongs to the bacterial ribosomal protein bL35 family.

This chain is Large ribosomal subunit protein bL35, found in Xylella fastidiosa (strain M12).